The sequence spans 275 residues: Bis(5'-nucleosyl)-tetraphosphatase, symmetrical (275 aa).

Belongs to the Ap4A hydrolase family.

The enzyme catalyses P(1),P(4)-bis(5'-adenosyl) tetraphosphate + H2O = 2 ADP + 2 H(+). In terms of biological role, hydrolyzes diadenosine 5',5'''-P1,P4-tetraphosphate to yield ADP. This is Bis(5'-nucleosyl)-tetraphosphatase, symmetrical from Marinomonas sp. (strain MWYL1).